We begin with the raw amino-acid sequence, 240 residues long: Probable transcriptional regulatory protein BLi02909/BL01150 (240 aa).

The span at 1–14 (MAGHSKWKNIQRRK) shows a compositional bias: basic residues. The segment at 1–21 (MAGHSKWKNIQRRKNAQDAKR) is disordered.

The protein belongs to the TACO1 family.

Its subcellular location is the cytoplasm. The chain is Probable transcriptional regulatory protein BLi02909/BL01150 from Bacillus licheniformis (strain ATCC 14580 / DSM 13 / JCM 2505 / CCUG 7422 / NBRC 12200 / NCIMB 9375 / NCTC 10341 / NRRL NRS-1264 / Gibson 46).